Consider the following 205-residue polypeptide: Methylthioribulose-1-phosphate dehydratase (205 aa).

Zn(2+)-binding residues include H96 and H98.

This sequence belongs to the aldolase class II family. MtnB subfamily. Zn(2+) is required as a cofactor.

The enzyme catalyses 5-(methylsulfanyl)-D-ribulose 1-phosphate = 5-methylsulfanyl-2,3-dioxopentyl phosphate + H2O. It participates in amino-acid biosynthesis; L-methionine biosynthesis via salvage pathway; L-methionine from S-methyl-5-thio-alpha-D-ribose 1-phosphate: step 2/6. Its function is as follows. Catalyzes the dehydration of methylthioribulose-1-phosphate (MTRu-1-P) into 2,3-diketo-5-methylthiopentyl-1-phosphate (DK-MTP-1-P). This chain is Methylthioribulose-1-phosphate dehydratase, found in Exiguobacterium sp. (strain ATCC BAA-1283 / AT1b).